A 595-amino-acid chain; its full sequence is Actin-histidine N-methyltransferase (595 aa).

Positions 1–22 (MGKKSRVKTQKSGTGATATVSP) are disordered. A compositionally biased stretch (polar residues) spans 10-20 (QKSGTGATATV). Residues arginine 75, 104–106 (EGF), arginine 254, 275–279 (DMCNH), and 325–327 (SGF) contribute to the S-adenosyl-L-methionine site. Positions 94–314 (EGFEMVNFKE…AGEQIYIFYG (221 aa)) constitute an SET domain. Serine 513 bears the Phosphoserine mark. Residues 549-573 (ENGLVNGENSIPNGTRSENENLNQE) show a composition bias toward polar residues. The disordered stretch occupies residues 549-595 (ENGLVNGENSIPNGTRSENENLNQEGSKRAVEDAKGSSSDSTDEVKE). Residues 574–583 (GSKRAVEDAK) show a composition bias toward basic and acidic residues.

This sequence belongs to the class V-like SAM-binding methyltransferase superfamily. SETD3 actin-histidine methyltransferase family. As to quaternary structure, interacts with MYOD1. Phosphorylated by GSK3B, which is required for recognition by the SCF(FBXW7) complex and subsequent degradation. In terms of processing, ubiquitinated by the SCF(FBXW7) complex following phosphorylation by GSK3B, leading to its degradation by the proteasome.

It localises to the cytoplasm. Its subcellular location is the nucleus. The catalysed reaction is L-histidyl-[protein] + S-adenosyl-L-methionine = N(tele)-methyl-L-histidyl-[protein] + S-adenosyl-L-homocysteine + H(+). In terms of biological role, protein-histidine N-methyltransferase that specifically mediates 3-methylhistidine (tele-methylhistidine) methylation of actin at 'His-73'. Histidine methylation of actin is required for smooth muscle contraction of the laboring uterus during delivery. Does not have protein-lysine N-methyltransferase activity and probably only catalyzes histidine methylation of actin. In Plecturocebus moloch (Dusky titi monkey), this protein is Actin-histidine N-methyltransferase.